The primary structure comprises 519 residues: Mannosyl-oligosaccharide alpha-1,2-mannosidase (519 aa).

Positions 1–22 (MKGSPVLAVCAAALTLIPSVVA) are cleaved as a signal peptide. The N-linked (GlcNAc...) asparagine glycan is linked to N187. The cysteines at positions 337 and 366 are disulfide-linked. E380 serves as the catalytic Proton donor. N443 carries an N-linked (GlcNAc...) asparagine glycan. T507 provides a ligand contact to Ca(2+).

The protein belongs to the glycosyl hydrolase 47 family. Monomer. It depends on Ca(2+) as a cofactor. Mg(2+) serves as cofactor.

It is found in the secreted. It carries out the reaction N(4)-(alpha-D-Man-(1-&gt;2)-alpha-D-Man-(1-&gt;2)-alpha-D-Man-(1-&gt;3)-[alpha-D-Man-(1-&gt;2)-alpha-D-Man-(1-&gt;3)-[alpha-D-Man-(1-&gt;2)-alpha-D-Man-(1-&gt;6)]-alpha-D-Man-(1-&gt;6)]-beta-D-Man-(1-&gt;4)-beta-D-GlcNAc-(1-&gt;4)-beta-D-GlcNAc)-L-asparaginyl-[protein] (N-glucan mannose isomer 9A1,2,3B1,2,3) + 4 H2O = N(4)-(alpha-D-Man-(1-&gt;3)-[alpha-D-Man-(1-&gt;3)-[alpha-D-Man-(1-&gt;6)]-alpha-D-Man-(1-&gt;6)]-beta-D-Man-(1-&gt;4)-beta-D-GlcNAc-(1-&gt;4)-beta-D-GlcNAc)-L-asparaginyl-[protein] (N-glucan mannose isomer 5A1,2) + 4 beta-D-mannose. The enzyme catalyses N(4)-(alpha-D-Man-(1-&gt;2)-alpha-D-Man-(1-&gt;2)-alpha-D-Man-(1-&gt;3)-[alpha-D-Man-(1-&gt;3)-[alpha-D-Man-(1-&gt;2)-alpha-D-Man-(1-&gt;6)]-alpha-D-Man-(1-&gt;6)]-beta-D-Man-(1-&gt;4)-beta-D-GlcNAc-(1-&gt;4)-beta-D-GlcNAc)-L-asparaginyl-[protein] (N-glucan mannose isomer 8A1,2,3B1,3) + 3 H2O = N(4)-(alpha-D-Man-(1-&gt;3)-[alpha-D-Man-(1-&gt;3)-[alpha-D-Man-(1-&gt;6)]-alpha-D-Man-(1-&gt;6)]-beta-D-Man-(1-&gt;4)-beta-D-GlcNAc-(1-&gt;4)-beta-D-GlcNAc)-L-asparaginyl-[protein] (N-glucan mannose isomer 5A1,2) + 3 beta-D-mannose. The protein operates within protein modification; protein glycosylation. Functionally, alpha-mannosidase involved in the maturation of Asn-linked oligosaccharides. Progressively trims alpha-1,2-linked mannose residues from Man(9)GlcNAc(2) to produce Man(5)GlcNAc(2). In Coccidioides posadasii (strain RMSCC 757 / Silveira) (Valley fever fungus), this protein is Mannosyl-oligosaccharide alpha-1,2-mannosidase.